The following is a 190-amino-acid chain: Copper-binding lipoprotein NosL (190 aa).

Positions 1 to 23 (MNALHRIGAGTLLAVLLAFGLTG) are cleaved as a signal peptide. Residue Cys-24 is the site of N-palmitoyl cysteine attachment. Cys-24 carries S-diacylglycerol cysteine lipidation. The disordered stretch occupies residues 170-190 (MQHGGMHDHAPNGAHNAHAGH). Positions 180-190 (PNGAHNAHAGH) are enriched in low complexity.

The protein belongs to the NosL family. Monomer.

Its subcellular location is the cell membrane. Its function is as follows. May act as a metallochaperone involved in nitrous oxide reductase assembly. Specifically binds Cu(+). This chain is Copper-binding lipoprotein NosL, found in Stutzerimonas stutzeri (Pseudomonas stutzeri).